The sequence spans 317 residues: tRNA dimethylallyltransferase (317 aa).

An ATP-binding site is contributed by 14-21 (GPTAVGKT). 16-21 (TAVGKT) contributes to the substrate binding site. The tract at residues 39–42 (DSMQ) is interaction with substrate tRNA.

Belongs to the IPP transferase family. Monomer. Mg(2+) serves as cofactor.

It catalyses the reaction adenosine(37) in tRNA + dimethylallyl diphosphate = N(6)-dimethylallyladenosine(37) in tRNA + diphosphate. Functionally, catalyzes the transfer of a dimethylallyl group onto the adenine at position 37 in tRNAs that read codons beginning with uridine, leading to the formation of N6-(dimethylallyl)adenosine (i(6)A). The protein is tRNA dimethylallyltransferase of Bacillus cereus (strain B4264).